Consider the following 196-residue polypeptide: GTP cyclohydrolase-2 (196 aa).

49-53 is a binding site for GTP; that stretch reads RIHSE. Residues Cys-54, Cys-65, and Cys-67 each contribute to the Zn(2+) site. GTP-binding positions include Gln-70, 92-94, and Thr-114; that span reads EGR. Asp-126 serves as the catalytic Proton acceptor. Arg-128 (nucleophile) is an active-site residue. GTP is bound by residues Thr-149 and Lys-154.

This sequence belongs to the GTP cyclohydrolase II family. In terms of assembly, homodimer. Requires Zn(2+) as cofactor.

The catalysed reaction is GTP + 4 H2O = 2,5-diamino-6-hydroxy-4-(5-phosphoribosylamino)-pyrimidine + formate + 2 phosphate + 3 H(+). Its pathway is cofactor biosynthesis; riboflavin biosynthesis; 5-amino-6-(D-ribitylamino)uracil from GTP: step 1/4. In terms of biological role, catalyzes the conversion of GTP to 2,5-diamino-6-ribosylamino-4(3H)-pyrimidinone 5'-phosphate (DARP), formate and pyrophosphate. This chain is GTP cyclohydrolase-2, found in Hamiltonella defensa subsp. Acyrthosiphon pisum (strain 5AT).